We begin with the raw amino-acid sequence, 386 residues long: L-arabinitol 4-dehydrogenase (386 aa).

Zn(2+) is bound by residues Cys-55, His-80, Glu-81, Cys-110, Cys-113, Cys-116, Cys-124, and Glu-165. NAD(+) is bound by residues 192–193, Asp-213, Arg-218, Ile-293, and 317–319; these read PI and QYR.

The protein belongs to the zinc-containing alcohol dehydrogenase family. In terms of assembly, homotetramer. The cofactor is Zn(2+).

It catalyses the reaction L-arabinitol + NAD(+) = L-xylulose + NADH + H(+). Its pathway is carbohydrate degradation; L-arabinose degradation via L-arabinitol; D-xylulose 5-phosphate from L-arabinose (fungal route): step 2/5. Its function is as follows. Catalyzes the NAD-dependent oxidation of L-arabinitol to L-xylulose in the fungal L-arabinose catabolic pathway. L-arabinose catabolism is important for using plant material as a carbon source. Not active with NADP as cosubstrate. This chain is L-arabinitol 4-dehydrogenase (ladA), found in Aspergillus niger (strain ATCC MYA-4892 / CBS 513.88 / FGSC A1513).